Here is a 119-residue protein sequence, read N- to C-terminus: Large ribosomal subunit protein bL20 (119 aa).

The protein belongs to the bacterial ribosomal protein bL20 family.

Functionally, binds directly to 23S ribosomal RNA and is necessary for the in vitro assembly process of the 50S ribosomal subunit. It is not involved in the protein synthesizing functions of that subunit. The polypeptide is Large ribosomal subunit protein bL20 (Clostridium beijerinckii (strain ATCC 51743 / NCIMB 8052) (Clostridium acetobutylicum)).